Here is a 317-residue protein sequence, read N- to C-terminus: Ribonuclease H2 subunit A (317 aa).

In terms of domain architecture, RNase H type-2 spans 43–270 (PCCLGVDEAG…AKDMLETKGG (228 aa)). Positions 49, 50, and 166 each coordinate a divalent metal cation.

The protein belongs to the RNase HII family. Eukaryotic subfamily. It depends on Mn(2+) as a cofactor. Mg(2+) is required as a cofactor.

The catalysed reaction is Endonucleolytic cleavage to 5'-phosphomonoester.. Its function is as follows. Endonuclease that specifically degrades the RNA of RNA-DNA hybrids. Participates in DNA replication. In Neurospora crassa (strain ATCC 24698 / 74-OR23-1A / CBS 708.71 / DSM 1257 / FGSC 987), this protein is Ribonuclease H2 subunit A (rnh-201).